The chain runs to 69 residues: Large ribosomal subunit protein uL29 (69 aa).

This sequence belongs to the universal ribosomal protein uL29 family.

This chain is Large ribosomal subunit protein uL29, found in Staphylococcus haemolyticus (strain JCSC1435).